The chain runs to 511 residues: Glucans biosynthesis protein G (511 aa).

Residues 1–22 (MMKMRWLSAAVMLTLYTSSSWA) form the signal peptide.

The protein belongs to the OpgD/OpgG family.

It localises to the periplasm. It functions in the pathway glycan metabolism; osmoregulated periplasmic glucan (OPG) biosynthesis. In terms of biological role, involved in the biosynthesis of osmoregulated periplasmic glucans (OPGs). The polypeptide is Glucans biosynthesis protein G (Escherichia coli O8 (strain IAI1)).